The following is a 373-amino-acid chain: MLIIIRPSGEIALKSPRSRRNFEHTLANNIRSVIKEGKIWRSQGVLFLEVNDNNKNIEELSKVFGIASFSPVMSIKSYNNNLEDIINKAKEVFAEIVKGKIFSVRAKRIGSHNFTSLDVQRKVGEALYPFSRGVNLENPEVEVFIEIRNDVAYFYYKIIKGPRGLPVGVAGKTVVLFSGGIDSPVATWMMMKRGSIPVILNFNLGGSVHRKFVLEELSVLRKWSGGHKLKLFIVNGTDVLIKLSQIEKRNRVVMLKRVMYKVAERLCDKANAKSITTGESLSQVSSQTMTNLYVTEYGIKYPIFRPLIGFDKEEIVELARKIGTYEYSIKLPEYCAISTKARTSVELNEVLKDEENLNIDYEKVLENSEVIEI.

The region spanning 54-158 (NKNIEELSKV…NDVAYFYYKI (105 aa)) is the THUMP domain. Residues 176-177 (LF), 201-202 (NF), Lys256, Gly278, and Gln287 contribute to the ATP site.

This sequence belongs to the ThiI family.

Its subcellular location is the cytoplasm. It catalyses the reaction [ThiI sulfur-carrier protein]-S-sulfanyl-L-cysteine + a uridine in tRNA + 2 reduced [2Fe-2S]-[ferredoxin] + ATP + H(+) = [ThiI sulfur-carrier protein]-L-cysteine + a 4-thiouridine in tRNA + 2 oxidized [2Fe-2S]-[ferredoxin] + AMP + diphosphate. The catalysed reaction is [ThiS sulfur-carrier protein]-C-terminal Gly-Gly-AMP + S-sulfanyl-L-cysteinyl-[cysteine desulfurase] + AH2 = [ThiS sulfur-carrier protein]-C-terminal-Gly-aminoethanethioate + L-cysteinyl-[cysteine desulfurase] + A + AMP + 2 H(+). It functions in the pathway cofactor biosynthesis; thiamine diphosphate biosynthesis. Its function is as follows. Catalyzes the ATP-dependent transfer of a sulfur to tRNA to produce 4-thiouridine in position 8 of tRNAs, which functions as a near-UV photosensor. Also catalyzes the transfer of sulfur to the sulfur carrier protein ThiS, forming ThiS-thiocarboxylate. This is a step in the synthesis of thiazole, in the thiamine biosynthesis pathway. The sulfur is donated as persulfide by IscS. This is Probable tRNA sulfurtransferase from Saccharolobus islandicus (strain L.S.2.15 / Lassen #1) (Sulfolobus islandicus).